The sequence spans 192 residues: uncharacterized protein (192 aa).

The first 24 residues, 1 to 24 (MSGVLSCVLRACACAGLCCWVCMG), serve as a signal peptide directing secretion. The interval 140–192 (RAGADEGAGGNAAGCPEDTRGFARSPGDLMGGMNGDLGDEGETGEGGDNGAGE) is disordered.

This is an uncharacterized protein from Human herpesvirus 6A (strain Uganda-1102) (HHV-6 variant A).